Consider the following 552-residue polypeptide: Transcription factor lcsF (552 aa).

4 disordered regions span residues 1-132, 169-209, 232-258, and 297-349; these read MAPA…DLDP, TSSY…ASLS, EATS…HWSS, and ELTS…QHGA. The tract at residues 31 to 55 is basic motif; that stretch reads KDRKEKKRIQNRVAQRSYRSRMKAR. The bZIP domain occupies 31-76; it reads KDRKEKKRIQNRVAQRSYRSRMKARLGELQSRLQAHEEQKAKEEAE. The segment at 56-63 is leucine-zipper; that stretch reads LGELQSRL. Over residues 64–79 the composition is skewed to basic and acidic residues; it reads QAHEEQKAKEEAERCD. 2 stretches are compositionally biased toward polar residues: residues 98–119 and 169–186; these read TPPS…NSAS and TSSY…SLSQ. Positions 298–347 are enriched in polar residues; it reads LTSTGDLPNATWRPSQQFSGPETTPRSHNAENPTQQQSPINDDTPSTTQH.

The protein belongs to the bZIP family.

It is found in the nucleus. Functionally, transcription factor that regulates the expression of the gene cluster that mediates the biosynthesis of the lipopeptide antibiotics leucinostatins that show extensive biological activities, including antimalarial, antiviral, antibacterial, antifungal, and antitumor activities, as well as phytotoxic. All 20 genes in the cluster are up-regulated to some extent by lcsF, with the exception of lcsL and lcsP, which are down-regulated. The chain is Transcription factor lcsF from Purpureocillium lilacinum (Paecilomyces lilacinus).